The primary structure comprises 369 residues: 4-hydroxy-3-methylbut-2-en-1-yl diphosphate synthase (flavodoxin) (369 aa).

4 residues coordinate [4Fe-4S] cluster: C270, C273, C305, and E312.

Belongs to the IspG family. [4Fe-4S] cluster serves as cofactor.

It catalyses the reaction (2E)-4-hydroxy-3-methylbut-2-enyl diphosphate + oxidized [flavodoxin] + H2O + 2 H(+) = 2-C-methyl-D-erythritol 2,4-cyclic diphosphate + reduced [flavodoxin]. Its pathway is isoprenoid biosynthesis; isopentenyl diphosphate biosynthesis via DXP pathway; isopentenyl diphosphate from 1-deoxy-D-xylulose 5-phosphate: step 5/6. Its function is as follows. Converts 2C-methyl-D-erythritol 2,4-cyclodiphosphate (ME-2,4cPP) into 1-hydroxy-2-methyl-2-(E)-butenyl 4-diphosphate. The polypeptide is 4-hydroxy-3-methylbut-2-en-1-yl diphosphate synthase (flavodoxin) (Pseudomonas fluorescens (strain ATCC BAA-477 / NRRL B-23932 / Pf-5)).